A 216-amino-acid chain; its full sequence is Elongation factor Ts (216 aa).

The segment at 81–84 is involved in Mg(2+) ion dislocation from EF-Tu; the sequence is TDFV.

It belongs to the EF-Ts family.

The protein localises to the cytoplasm. Its function is as follows. Associates with the EF-Tu.GDP complex and induces the exchange of GDP to GTP. It remains bound to the aminoacyl-tRNA.EF-Tu.GTP complex up to the GTP hydrolysis stage on the ribosome. The polypeptide is Elongation factor Ts (Geotalea daltonii (strain DSM 22248 / JCM 15807 / FRC-32) (Geobacter daltonii)).